The sequence spans 431 residues: Serine--tRNA ligase (431 aa).

L-serine is bound at residue 238-240 (TAE). 269 to 271 (RSE) provides a ligand contact to ATP. Glu292 lines the L-serine pocket. Residue 356–359 (EISS) participates in ATP binding. Residue Ser392 participates in L-serine binding.

It belongs to the class-II aminoacyl-tRNA synthetase family. Type-1 seryl-tRNA synthetase subfamily. Homodimer. The tRNA molecule binds across the dimer.

It is found in the cytoplasm. The enzyme catalyses tRNA(Ser) + L-serine + ATP = L-seryl-tRNA(Ser) + AMP + diphosphate + H(+). The catalysed reaction is tRNA(Sec) + L-serine + ATP = L-seryl-tRNA(Sec) + AMP + diphosphate + H(+). The protein operates within aminoacyl-tRNA biosynthesis; selenocysteinyl-tRNA(Sec) biosynthesis; L-seryl-tRNA(Sec) from L-serine and tRNA(Sec): step 1/1. Functionally, catalyzes the attachment of serine to tRNA(Ser). Is also able to aminoacylate tRNA(Sec) with serine, to form the misacylated tRNA L-seryl-tRNA(Sec), which will be further converted into selenocysteinyl-tRNA(Sec). This Pectobacterium atrosepticum (strain SCRI 1043 / ATCC BAA-672) (Erwinia carotovora subsp. atroseptica) protein is Serine--tRNA ligase.